Reading from the N-terminus, the 459-residue chain is Alpha,alpha-trehalose-phosphate synthase [UDP-forming] (459 aa).

Residues Tyr-86 and Asp-140 each contribute to the D-glucose 6-phosphate site. UDP-binding residues include Arg-262 and Lys-267. UDP-alpha-D-glucose is bound by residues Arg-262 and Lys-267. Position 300 (Arg-300) interacts with D-glucose 6-phosphate. Asp-361–Glu-369 serves as a coordination point for UDP-alpha-D-glucose. A UDP-binding site is contributed by Leu-365 to Glu-369.

Belongs to the glycosyltransferase 20 family. Component of the trehalose synthase complex.

Its subcellular location is the cytoplasm. The catalysed reaction is D-glucose 6-phosphate + UDP-alpha-D-glucose = alpha,alpha-trehalose 6-phosphate + UDP + H(+). Synthase catalytic subunit of the trehalose synthase complex that catalyzes the production of trehalose from glucose-6-phosphate and UDP-alpha-D-glucose in a two step process. Can function independently of the complex. The sequence is that of Alpha,alpha-trehalose-phosphate synthase [UDP-forming] (TPS1) from Encephalitozoon cuniculi (strain GB-M1) (Microsporidian parasite).